The chain runs to 326 residues: MVSQTVSVAVTGGTGQIAYSFLFSLAHGDVFGLDCGIDLRIYDIPGTERALSGVRMELDDGAFPLLQRVQVTTSLHDAFDGIDAAFLIGSVPRGPGMERRDLLKKNGEIVATQGKALNTTAKRDAKIFVVGNPVNTNCWIAMNHAPRLLRKNFHAMLRLDQNRMHSMLSHRAEVPLSAVSQVVVWGNHSAKQVPDFTQALINDRPIAETIADRDWLENIMVPSVQSRGSAVIEARGKSSAASAARALAEAARSIYQPKEGEWFSSGVCSDHNPYGLPEDLIFGFPCRMLATGEYEVIPGLPWDAFIRGKMQISLDEILQEKASVSL.

An NAD(+)-binding site is contributed by 12–18 (GGTGQIA). Positions 93 and 99 each coordinate substrate. NAD(+)-binding positions include Asn106, Gln113, and 130–132 (VGN). Residues Asn132 and Arg163 each coordinate substrate. The active-site Proton acceptor is the His188.

This sequence belongs to the LDH/MDH superfamily. MDH type 2 family.

The catalysed reaction is (S)-malate + NAD(+) = oxaloacetate + NADH + H(+). In terms of biological role, catalyzes the reversible oxidation of malate to oxaloacetate. This is Malate dehydrogenase from Chlamydia trachomatis serovar L2 (strain ATCC VR-902B / DSM 19102 / 434/Bu).